The following is a 188-amino-acid chain: Large ribosomal subunit protein uL5 (188 aa).

It belongs to the universal ribosomal protein uL5 family. As to quaternary structure, part of the 50S ribosomal subunit; contacts the 5S rRNA and probably tRNA. Forms a bridge to the 30S subunit in the 70S ribosome.

This is one of the proteins that bind and probably mediate the attachment of the 5S RNA into the large ribosomal subunit, where it forms part of the central protuberance. In the 70S ribosome it contacts protein S13 of the 30S subunit (bridge B1b), connecting the 2 subunits; this bridge is implicated in subunit movement. May contact the P site tRNA; the 5S rRNA and some of its associated proteins might help stabilize positioning of ribosome-bound tRNAs. The chain is Large ribosomal subunit protein uL5 from Pyrococcus abyssi (strain GE5 / Orsay).